Consider the following 1450-residue polypeptide: M-protein, striated muscle (1450 aa).

Residues 66 to 87 (AHEAMQESRKRTHEQKSHASDE) form a disordered region. Ig-like C2-type domains lie at 142–233 (PEIL…CAVV) and 254–359 (PLSY…AFLF). Fibronectin type-III domains are found at residues 373 to 468 (APMD…ALDP), 501 to 596 (PPTN…PQDI), 602 to 695 (APGR…VQAA), 698 to 800 (CPSY…TMPE), and 803 to 900 (PAYD…ASPG). 5 consecutive Ig-like C2-type domains span residues 899–995 (PGTK…LMTL), 1002–1115 (PTIP…FLRK), 1118–1204 (PHFS…LELS), 1225–1322 (PLKI…QRLK), and 1333–1422 (KVIG…VTVS).

Expressed in pectoralis and cardiac muscle.

Functionally, is a structural constituent of myofibrillar M-band in striated muscle. The polypeptide is M-protein, striated muscle (Gallus gallus (Chicken)).